Reading from the N-terminus, the 200-residue chain is Inner membrane protein E199L (200 aa).

Residue asparagine 131 is glycosylated (N-linked (GlcNAc...) asparagine; by host). The chain crosses the membrane as a helical span at residues 150–170 (INVMNHPFLTLILIILILIII).

Belongs to the asfivirus E199L family. Interacts with host PYCR2; this interaction results in autophagy activation. Post-translationally, contains intramolecular disulfide bonds.

It is found in the virion membrane. The protein resides in the host membrane. Its function is as follows. Essential for viral fusion with host endosomal membrane and core release. Not required for virus morphogenesis and egress. Induces complete autophagy through the interaction with and down-regulation of host PYCR2. The chain is Inner membrane protein E199L from Ornithodoros (relapsing fever ticks).